A 478-amino-acid polypeptide reads, in one-letter code: Protein nucleotidyltransferase YdiU (478 aa).

ATP is bound by residues Gly84, Gly86, Arg87, Lys107, Asp119, Gly120, Arg170, and Arg177. Catalysis depends on Asp246, which acts as the Proton acceptor. Residues Asn247 and Asp256 each contribute to the Mg(2+) site. Asp256 contacts ATP.

This sequence belongs to the SELO family. Mg(2+) serves as cofactor. Mn(2+) is required as a cofactor.

It catalyses the reaction L-seryl-[protein] + ATP = 3-O-(5'-adenylyl)-L-seryl-[protein] + diphosphate. The enzyme catalyses L-threonyl-[protein] + ATP = 3-O-(5'-adenylyl)-L-threonyl-[protein] + diphosphate. The catalysed reaction is L-tyrosyl-[protein] + ATP = O-(5'-adenylyl)-L-tyrosyl-[protein] + diphosphate. It carries out the reaction L-histidyl-[protein] + UTP = N(tele)-(5'-uridylyl)-L-histidyl-[protein] + diphosphate. It catalyses the reaction L-seryl-[protein] + UTP = O-(5'-uridylyl)-L-seryl-[protein] + diphosphate. The enzyme catalyses L-tyrosyl-[protein] + UTP = O-(5'-uridylyl)-L-tyrosyl-[protein] + diphosphate. Functionally, nucleotidyltransferase involved in the post-translational modification of proteins. It can catalyze the addition of adenosine monophosphate (AMP) or uridine monophosphate (UMP) to a protein, resulting in modifications known as AMPylation and UMPylation. This is Protein nucleotidyltransferase YdiU from Escherichia coli (strain K12 / MC4100 / BW2952).